The primary structure comprises 531 residues: Protein SHORT-ROOT (531 aa).

The segment covering 14-39 (QQSDSIITNQSSLSRTSTTTTGSPQT) has biased composition (low complexity). 2 disordered regions span residues 14–40 (QQSDSIITNQSSLSRTSTTTTGSPQTA) and 65–103 (SSSSSHHNHHNHNNPNTYYSPFTTPTQYHPATSSTPSST). Polar residues predominate over residues 81–93 (TYYSPFTTPTQYH). The segment covering 94-103 (PATSSTPSST) has biased composition (low complexity). The GRAS domain maps to 134–529 (FDFSANAKWA…QPVVWASAWR (396 aa)). The segment at 141-206 (KWADSVLLEA…GSGERCYRTM (66 aa)) is leucine repeat I (LRI). Residues 225–290 (VLKFQEVSPW…DDTPHLRLTT (66 aa)) form a VHIID region. Residues 256–260 (IHIVD) carry the VHIID motif. Positions 310–343 (EIGNRMEKFARLMGVPFKFNIIHHVGDLSEFDLN) are leucine repeat II (LRII). The PFYRE stretch occupies residues 353–449 (LAINCVGAMH…ERAAGRAIVD (97 aa)). The tract at residues 452–529 (ACEPSDSTER…QPVVWASAWR (78 aa)) is SAW.

The protein belongs to the GRAS family. As to quaternary structure, interacts with SCR, SCL23, JKD and MGP. Interacts with SIEL. Association to endosomes and intercellular movement of SHR rely on the interaction with SIEL. Expressed in the stele and the quiescent center. Not detected in the ground tissue cell lineage. The SHR protein moves from the stele to a single layer of adjacent cells, where it enters the nucleus.

Its subcellular location is the cytoplasm. The protein localises to the nucleus. It localises to the early endosome. The protein resides in the late endosome. It is found in the recycling endosome. In terms of biological role, transcription factor required for quiescent center cells specification and maintenance of surrounding stem cells, and for the asymmetric cell division involved in radial pattern formation in roots. Essential for both cell division and cell specification. Regulates the radial organization of the shoot axial organs and is required for normal shoot gravitropism. Directly controls the transcription of SCR, and when associated with SCR, of MGP, RLK, TRI, NUC and SCL3. The chain is Protein SHORT-ROOT from Arabidopsis thaliana (Mouse-ear cress).